The sequence spans 552 residues: Glutamine--tRNA ligase (552 aa).

Residues 33–43 carry the 'HIGH' region motif; the sequence is PEPNGYLHIGH. ATP contacts are provided by residues 34-36 and 40-46; these read EPN and HIGHAKS. Asp-66 and Tyr-210 together coordinate L-glutamine. ATP contacts are provided by residues Thr-229, 259-260, and 267-269; these read RL and MSK. The short motif at 266–270 is the 'KMSKS' region element; it reads VMSKR.

The protein belongs to the class-I aminoacyl-tRNA synthetase family. Monomer.

It localises to the cytoplasm. It catalyses the reaction tRNA(Gln) + L-glutamine + ATP = L-glutaminyl-tRNA(Gln) + AMP + diphosphate. The sequence is that of Glutamine--tRNA ligase from Clostridium perfringens (strain ATCC 13124 / DSM 756 / JCM 1290 / NCIMB 6125 / NCTC 8237 / Type A).